Here is a 393-residue protein sequence, read N- to C-terminus: DNA polymerase processivity factor (393 aa).

Disordered stretches follow at residues 25–50 (EMER…REPP), 311–339 (ESRF…ALAS), and 355–393 (KNGT…RCVV). The segment covering 31–41 (RDHHRDHRDHR) has biased composition (basic residues). Residues 311–333 (ESRFERMGKQDDGKGDRSHKNDD) are compositionally biased toward basic and acidic residues.

This sequence belongs to the herpesviridae polymerase accessory protein family.

In terms of biological role, accessory subunit of the DNA polymerase that acts to increase the processivity of polymerization. The chain is DNA polymerase processivity factor (U27) from Human herpesvirus 6A (strain Uganda-1102) (HHV-6 variant A).